A 2458-amino-acid polypeptide reads, in one-letter code: MNLPGEIHHRFTYMYIAQVSFADLDITKHNLPISTMSSSDSPNYGDATMPIAIVGMAARFSGEATNPSKLWDMMVQGRTGHSAVPENRFDAEAWHHPSHERRGTIQPRSGFFLREDPAVFDAPFFSMTAKEAAGMDPMQRKLLEISYEAFENAGIPITKLPGTATGVYSGVMTNDYELMTAGDPMQLPQNAASGTSRAMLANRISWFYDLRGPSFALDTACSSSLYALHLACQSLQAGETDQALVTGVNLILAPNFISQLSSMHMLSPDGKSHSFDSRANGYARGEALAAVVVKPLYQALADGDTIRAVIRGSGANQDGKTVGITIPNPQAQAELIRKTYATAGLGLEQTGYFEAHGTGTPVGDPIELSAIGTSFGEHRSQNCPLFVGSVKTNVGHTEGAAGLAGVVKTVLALEAGIIPPLADFQELNEKLRLEEWKLALPLKATPWPMPGLRRASVNSFGFGGANAHVILDDAYHYLKSHGLSANHHTTLSESEDSSDSGLEMDSSTSDSGEGQSSKLLLFSAYDGAGIKRTEASWNSHLADILADSKTVDETMGMNDLAYTLSDRRTTFDFRSFAVASSVQDLKAKLENDGLPRLNRASRRSNPVFVFTGQGAQWPAMGRELLSNPIFRASIERSKAVLELEGCEWDVVQVLSDPQDQRIHIPAFSQPVCTILQVALVDLLQSWGIQPAATVGHSSGEVAAAYAAKMISQDEAVRIGYWRGFYSEQVKARLENIRGSMMAVGLSESQATSYLNRVPEGSVVVACINSPSSVTLSGEDHSIKTLEAILQADGHFARKLRVEVAYHSPHMKTVADEFLNAVGIITPQPSEIPMFSSVTETRVEDPATLVASYWMQNLISPVRFSGALATLLNDTPSVKANTRRRRTAGIVWSALIEVGPHEALKGPCRQIMSGLNTKLADQIPYMSVLSRGKSAVETSLTAAGLLWASGHPINIREVNQYRDTGERVITDLPPYPWNHEKGFWHEPAASISARLRKEPRNDLLGVPVAQQNPFERCWQNYLSVSECPWQKDHVITGTVLYPGAGHLIMAFEAAIRLAADNRPLKGVSFSDVHFDKGLVIPSDDHGVETRLCTRPHESLLDWYHYTLYSINATGDWTKHSWGSFSLHYEDAVSVQQAKRSKGEYDDINTRACRKLDVESFYEQLLSIGTEYGPTFRNLVHAAAAPGYHSGVGTITIPDTKSVMPHEFEYPHLIHPATLDAIFHLIFVAMGEGNALSESAIPTRVDRIYISTDLPRGVGAKYTGYGRAEPVSSRDTLGTIVVSDENWSAGPKIIVEGMTVTEVSAGASTSFNSLLIPGGQGRIATLEWKEDVDSLVGPTAESWLAQKGPSIGGQASDVTEAVQRLDAWLELSCFKSTDLGTLVICPSKLKGSFELVKKYGSKHGERYRFGRTTIIEFSENDISAAESAFAPHGIESSYAAIDLSATPEHAMEQLGMFDLIIAEENVIVQFPDVTKILHREGRVAIIRSHALPDERHFAATKGLLKEISFESQDGSILQIAGLGLEMDPAIRSLDDVVLLQHVDASPAAKNFEKRLTAQLTSLGAHVRSNTIANASSLSGNIVISLLEIDCQFVISWTSEEFEQFRQLTNARYVLWITRGGLLDADRASLDYAPSTGLLRTVRVEKPQIRLPHLDLSPSLDLNSDRAVEIVISAFHSSIKPSVKEKNLEMEYAESNGLLYIPRARGHAALDHELALRGEKVSSIPGPLSAPGIARRLETSLAGSPSQARWVPDETVGDKLADFDVEIQVSHVGLEHSKVENYLNGKQLSLAPGLGRVAVGTLTRAGAKVSRFIPGDQVFALHAAPFHTHLRVTEDAVHAVPDILSPAQAAHLPLAAARAWHSLIDVAAFRAGQSVFVNGASDTVGRLTVELARLLKGDVFASVSSDDEKHTLTKTYNIPEDHIFSLSHRTDWASDLKAAMGQGQLDIVINNATPSPAIRSLFQSIAPKGRFVDLTQRLDPSLLDPRMFQRNVTLSLVDWESLTNPQLGALMVRSLDLLRAGALTPIKEEYIFSVSDLPEALLSVGQQQHERVAAPVVVEFSADATVPLLPSLPAPLHLKPDATYILAGGLGALGLTIAENMCSHGAGHLVFLSRSGASSQRQQEALESFRARGCKVDVVKCDVTDQEQVQALATQIREQSWNVRGIIQLAMVLRDSIFENMTFDKWETAVNPKIKGTWNLHAELPKDVDFFIILSSLSGIIGNTAQANYCAGNTYEDALAHYRRKQGLAATTLNVGLVTDASHFNENSTIEDYLRKYSHWIAAQVTDSELQHTITAVMRRTVGDKNEPVPDQLLVGLSDNVRRDGNSLNLWPQDRKFDHRISLEDGLGVVEKDTNQQKLKASTTVAQAHEVVETALRLNVAAAMTASPDDIDIEKPLYAFGIDSLKGIEVRNWIFSELQADVSVFEVLSPMTLSRLALKIVSKSTLVGAELAAEAAADSVA.

The Ketosynthase family 3 (KS3) domain occupies 48–473 (TMPIAIVGMA…GANAHVILDD (426 aa)). Catalysis depends on for beta-ketoacyl synthase activity residues C221, H356, and H396. The disordered stretch occupies residues 488–515 (HTTLSESEDSSDSGLEMDSSTSDSGEGQ). The span at 499–515 (DSGLEMDSSTSDSGEGQ) shows a compositional bias: low complexity. The segment at 609-932 (VFTGQGAQWP…PYMSVLSRGK (324 aa)) is malonyl-CoA:ACP transacylase (MAT) domain. The active-site For malonyltransferase activity is S697. The tract at residues 1000–1130 (NDLLGVPVAQ…GSFSLHYEDA (131 aa)) is N-terminal hotdog fold. One can recognise a PKS/mFAS DH domain in the interval 1000 to 1307 (NDLLGVPVAQ…VTEVSAGAST (308 aa)). Residues 1001–1305 (DLLGVPVAQQ…MTVTEVSAGA (305 aa)) form a dehydratase (DH) domain region. H1032 serves as the catalytic Proton acceptor; for dehydratase activity. The interval 1148–1307 (TRACRKLDVE…VTEVSAGAST (160 aa)) is C-terminal hotdog fold. Residue D1218 is the Proton donor; for dehydratase activity of the active site. The enoylreductase (ER) domain stretch occupies residues 1740 to 2051 (GSPSQARWVP…GQQQHERVAA (312 aa)). The tract at residues 2076–2264 (KPDATYILAG…VTDASHFNEN (189 aa)) is ketoreductase (KR) domain. Residues 2359-2441 (STTVAQAHEV…RLALKIVSKS (83 aa)) enclose the Carrier domain. S2401 bears the O-(pantetheine 4'-phosphoryl)serine mark.

It functions in the pathway polyketide biosynthesis. Highly reducing polyketide synthase; part of the gene cluster that mediates the biosynthesis of asperlin, a polyketide showing anti-inflammatory, antitumor and antibiotic activities. The first step of the asperlin biosynthesis is the production of the intermediate 2,4,6-octatrienoic acid by the highly redusing polyketide synthase alnA with cleavage of the PKS product by the esterase alnB. 2,4,6-octatrienoic acid is further converted to asperlin via several steps involving the remaining enzymes from the cluster. The sequence is that of Highly reducing polyketide synthase alnA from Emericella nidulans (strain FGSC A4 / ATCC 38163 / CBS 112.46 / NRRL 194 / M139) (Aspergillus nidulans).